The sequence spans 353 residues: UPF0283 membrane protein YcjF (353 aa).

The segment covering 1–19 (MSEPLKPRIDFAEPLKEEP) has biased composition (basic and acidic residues). Residues 1-35 (MSEPLKPRIDFAEPLKEEPTSAFKAQQTFSEAESR) are disordered. Helical transmembrane passes span 70 to 90 (MVMG…VQWT), 100 to 120 (VALG…GSVV), and 213 to 233 (ESTL…FIAW).

It belongs to the UPF0283 family.

The protein localises to the cell inner membrane. The polypeptide is UPF0283 membrane protein YcjF (Salmonella paratyphi B (strain ATCC BAA-1250 / SPB7)).